Here is a 549-residue protein sequence, read N- to C-terminus: Calcium-dependent protein kinase 5 (549 aa).

The N-myristoyl glycine moiety is linked to residue G2. The segment at 43-69 is disordered; that stretch reads DEPAGKKAPRGSAAAADAPHAASMKRG. A compositionally biased stretch (low complexity) spans 52–64; sequence RGSAAAADAPHAA. A Protein kinase domain is found at 92–350; sequence YALGRKLGQG…AHEVLCHPWI (259 aa). Residues 98-106 and K121 contribute to the ATP site; that span reads LGQGQFGTT. Catalysis depends on D216, which acts as the Proton acceptor. The segment at 356 to 386 is autoinhibitory domain; it reads APDRPLDPAVLSRIKQFSAMNKLKKMALRVI. EF-hand domains are found at residues 393 to 428, 429 to 464, 465 to 500, and 501 to 534; these read EEIAGLKEMFKAMDTDNSGAITYDELKEGMRKYGST, LKDTEIRDLMEAADVDNSGTIDYIEFIAATLHLNKL, EREEHLVAAFSYFDKDGSGYITVDELQQACKEHNMP, and DAFLDDVIKEADQDNDGRIDYGEFVAMMTKGNMG. Residues D406, D408, S410, E417, D442, D444, S446, T448, E453, D478, D480, S482, Y484, E489, D512, D514, D516, R518, and E523 each coordinate Ca(2+).

Belongs to the protein kinase superfamily. Ser/Thr protein kinase family. CDPK subfamily.

It is found in the membrane. It catalyses the reaction L-seryl-[protein] + ATP = O-phospho-L-seryl-[protein] + ADP + H(+). The catalysed reaction is L-threonyl-[protein] + ATP = O-phospho-L-threonyl-[protein] + ADP + H(+). Its activity is regulated as follows. Activated by calcium. Autophosphorylation may play an important role in the regulation of the kinase activity. Functionally, may play a role in signal transduction pathways that involve calcium as a second messenger. This is Calcium-dependent protein kinase 5 from Oryza sativa subsp. japonica (Rice).